The chain runs to 122 residues: Big defensin (122 aa).

A signal peptide spans 1–28 (MTRPSLVRCYSLFFTALIVMAIICPAWS). Positions 29–34 (EEIPKS) are excised as a propeptide. 3 cysteine pairs are disulfide-bonded: cysteine 88-cysteine 119, cysteine 95-cysteine 114, and cysteine 99-cysteine 120.

Belongs to the big defensin family. In terms of tissue distribution, expressed in hemocytes.

The protein localises to the secreted. In terms of biological role, significantly inhibits the growth of Gram-negative and Gram-positive bacteria and fungi in vitro. This is Big defensin from Argopecten irradians (Bay scallop).